The chain runs to 351 residues: Protein IBD2 (351 aa).

Positions methionine 1–serine 14 are enriched in polar residues. The interval methionine 1 to glutamate 20 is disordered. 2 positions are modified to phosphoserine: serine 100 and serine 106. Threonine 211 bears the Phosphothreonine mark. Residues leucine 223–arginine 249 form a disordered region. Residues serine 232–arginine 249 are compositionally biased toward basic residues.

It belongs to the IBD2 family. In terms of assembly, interacts with BFA1.

Its subcellular location is the cytoplasm. It is found in the cytoskeleton. The protein resides in the spindle pole. Its function is as follows. Part of a checkpoint which monitors spindle integrity and prevents premature exit from mitosis. This cell-cycle arrest depends upon inhibition of the G-protein TEM1 by the BFA1/BUB2 complex. The sequence is that of Protein IBD2 (IBD2) from Saccharomyces cerevisiae (strain ATCC 204508 / S288c) (Baker's yeast).